The sequence spans 298 residues: N-acetylmuramic acid 6-phosphate etherase (298 aa).

Residues 55–218 (IHAQVSGGGR…STGLMIKSGK (164 aa)) enclose the SIS domain. The Proton donor role is filled by Glu-83. The active site involves Glu-114.

It belongs to the GCKR-like family. MurNAc-6-P etherase subfamily. Homodimer.

It catalyses the reaction N-acetyl-D-muramate 6-phosphate + H2O = N-acetyl-D-glucosamine 6-phosphate + (R)-lactate. Its pathway is amino-sugar metabolism; 1,6-anhydro-N-acetylmuramate degradation. It functions in the pathway amino-sugar metabolism; N-acetylmuramate degradation. It participates in cell wall biogenesis; peptidoglycan recycling. In terms of biological role, specifically catalyzes the cleavage of the D-lactyl ether substituent of MurNAc 6-phosphate, producing GlcNAc 6-phosphate and D-lactate. Together with AnmK, is also required for the utilization of anhydro-N-acetylmuramic acid (anhMurNAc) either imported from the medium or derived from its own cell wall murein, and thus plays a role in cell wall recycling. The polypeptide is N-acetylmuramic acid 6-phosphate etherase (Escherichia fergusonii (strain ATCC 35469 / DSM 13698 / CCUG 18766 / IAM 14443 / JCM 21226 / LMG 7866 / NBRC 102419 / NCTC 12128 / CDC 0568-73)).